Consider the following 216-residue polypeptide: Probable nicotinate-nucleotide adenylyltransferase (216 aa).

It belongs to the NadD family.

The enzyme catalyses nicotinate beta-D-ribonucleotide + ATP + H(+) = deamido-NAD(+) + diphosphate. It functions in the pathway cofactor biosynthesis; NAD(+) biosynthesis; deamido-NAD(+) from nicotinate D-ribonucleotide: step 1/1. Catalyzes the reversible adenylation of nicotinate mononucleotide (NaMN) to nicotinic acid adenine dinucleotide (NaAD). This is Probable nicotinate-nucleotide adenylyltransferase from Shewanella baltica (strain OS195).